We begin with the raw amino-acid sequence, 188 residues long: Elongation factor P-like protein (188 aa).

It belongs to the elongation factor P family.

In Saccharophagus degradans (strain 2-40 / ATCC 43961 / DSM 17024), this protein is Elongation factor P-like protein.